Reading from the N-terminus, the 847-residue chain is DNA gyrase subunit A (847 aa).

A Topo IIA-type catalytic domain is found at 34-533 (LPDVRDGLKP…NYSDINTSDL (500 aa)). The active-site O-(5'-phospho-DNA)-tyrosine intermediate is Y122. The GyrA-box signature appears at 560–566 (QKRGGKG).

This sequence belongs to the type II topoisomerase GyrA/ParC subunit family. Heterotetramer, composed of two GyrA and two GyrB chains. In the heterotetramer, GyrA contains the active site tyrosine that forms a transient covalent intermediate with DNA, while GyrB binds cofactors and catalyzes ATP hydrolysis.

Its subcellular location is the cytoplasm. The catalysed reaction is ATP-dependent breakage, passage and rejoining of double-stranded DNA.. A type II topoisomerase that negatively supercoils closed circular double-stranded (ds) DNA in an ATP-dependent manner to modulate DNA topology and maintain chromosomes in an underwound state. Negative supercoiling favors strand separation, and DNA replication, transcription, recombination and repair, all of which involve strand separation. Also able to catalyze the interconversion of other topological isomers of dsDNA rings, including catenanes and knotted rings. Type II topoisomerases break and join 2 DNA strands simultaneously in an ATP-dependent manner. This chain is DNA gyrase subunit A, found in Buchnera aphidicola subsp. Baizongia pistaciae (strain Bp).